The chain runs to 465 residues: RuvB-like helicase 2 (465 aa).

73-80 (GEPSTGKT) contacts ATP.

This sequence belongs to the RuvB family. Forms homohexameric rings. May form a dodecamer with pont made of two stacked hexameric rings. Component of the chromatin remodeling Ino80 complex.

It localises to the nucleus. The catalysed reaction is ATP + H2O = ADP + phosphate + H(+). Functionally, acts as a transcriptional coactivator in Wg signaling. In terms of biological role, proposed core component of the chromatin remodeling Ino80 complex which is involved in transcriptional regulation, DNA replication and probably DNA repair. This chain is RuvB-like helicase 2, found in Aedes aegypti (Yellowfever mosquito).